The primary structure comprises 394 residues: Ceramide glucosyltransferase (394 aa).

At 1–10 (MALLDLAQEG) the chain is on the lumenal side. A helical membrane pass occupies residues 11-32 (MALFGFVLFVVLWLMHFMSIIY). Residues 33–195 (TRLHLNKKAT…QVYFGTSHPR (163 aa)) are Cytoplasmic-facing. D92 is a short sequence motif (D1). An N6-acetyllysine modification is found at K117. D144 is a short sequence motif (D2). A helical membrane pass occupies residues 196 to 215 (SYISANVTGFKCVTGMSCLM). The Lumenal segment spans residues 216–287 (RKDVLDQAGG…KLRINMLPAT (72 aa)). Position 236 (D236) is a short sequence motif, D3. Residue D236 is the Proton acceptor of the active site. The short motif at 272–276 (RMIRW) is the (Q/R)XXRW element. A helical membrane pass occupies residues 288 to 304 (IICEPISECFVASLIIG). At 305–309 (WAAHH) the chain is on the cytoplasmic side. A helical membrane pass occupies residues 310–328 (VFRWDIMVFFMCHCLAWFI). The Lumenal segment spans residues 329–348 (FDYIQLRGVQGGTLCFSKLD). A helical membrane pass occupies residues 349-369 (YAVAWFIRESMTIYIFLSALW). Residues 370-394 (DPTISWRTGRYRLRCGGTAEEILDV) lie on the Cytoplasmic side of the membrane.

This sequence belongs to the glycosyltransferase 2 family. In terms of assembly, interacts with RTN1; regulates the ceramide glucosyltransferase activity of UGCG.

It is found in the golgi apparatus membrane. The enzyme catalyses an N-acylsphing-4-enine + UDP-alpha-D-glucose = a beta-D-glucosyl-(1&lt;-&gt;1')-N-acylsphing-4-enine + UDP + H(+). It catalyses the reaction UDP-alpha-D-xylose + an N-acylsphing-4-enine = a beta-D-xylosyl-(1&lt;-&gt;1')-N-acylsphing-4-enine + UDP + H(+). The catalysed reaction is N-(9Z-octadecenoyl)-sphing-4-enine + UDP-alpha-D-xylose = beta-D-xylosyl-(1&lt;-&gt;1')-N-(9Z-octadecenoyl)-sphing-4-enine + UDP + H(+). It participates in lipid metabolism; sphingolipid metabolism. In terms of biological role, participates in the initial step of the glucosylceramide-based glycosphingolipid/GSL synthetic pathway at the cytosolic surface of the Golgi. Catalyzes the transfer of glucose from UDP-glucose to ceramide to produce glucosylceramide/GlcCer (such as beta-D-glucosyl-(1&lt;-&gt;1')-N-acylsphing-4-enine). Glucosylceramide is the core component of glycosphingolipids/GSLs, amphipathic molecules consisting of a ceramide lipid moiety embedded in the outer leaflet of the membrane, linked to one of hundreds of different externally oriented oligosaccharide structures. Glycosphingolipids are essential components of membrane microdomains that mediate membrane trafficking and signal transduction. They are implicated in many fundamental cellular processes, including growth, differentiation, migration, morphogenesis, cell-to-cell and cell-to-matrix interactions. They are required for instance in the proper development and functioning of the nervous system. As an example of their role in signal transduction, they regulate the leptin receptor/LEPR in the leptin-mediated signaling pathway. They also play an important role in the establishment of the skin barrier regulating keratinocyte differentiation and the proper assembly of the cornified envelope. The biosynthesis of GSLs is also required for the proper intestinal endocytic uptake of nutritional lipids. Catalyzes the synthesis of xylosylceramide/XylCer (such as beta-D-xylosyl-(1&lt;-&gt;1')-N-acylsphing-4-enine) using UDP-Xyl as xylose donor. This chain is Ceramide glucosyltransferase, found in Mus musculus (Mouse).